Consider the following 740-residue polypeptide: DNA (cytosine-5)-methyltransferase 3C (740 aa).

2 disordered regions span residues 75–99 and 248–312; these read LTGD…PVMP and FKPT…DVTN. Residues 309-441 form the ADD domain; the sequence is DVTNNKGNLE…LQDFFTTDPD (133 aa). The GATA-type; atypical zinc finger occupies 320 to 350; that stretch reads HCLSCGRKDPVSFHPLFEGGLCQSCRDRFLE. A PHD-type; atypical zinc finger spans residues 361–417; that stretch reads QSYCTVCCEGRELLLCSNTSCCRCFCVECLEVLVGAGTAEDVKLQEPWSCYMCLPQR. Positions 462–740 constitute an SAM-dependent MTase C5-type domain; that stretch reads IRVLSLFDGI…APLKDHFACE (279 aa). S-adenosyl-L-methionine contacts are provided by Ile-471, Thr-473, Glu-492, Asp-514, and Ile-515. Cys-538 is an active-site residue. Arg-719 and Trp-721 together coordinate S-adenosyl-L-methionine.

Belongs to the class I-like SAM-binding methyltransferase superfamily. C5-methyltransferase family. As to quaternary structure, homodimer. Interacts with DNMT3L. Interacts with SPOCD1; recruiting Dnmt3C to transposons. As to expression, specifically expressed in testis.

It is found in the nucleus. The enzyme catalyses a 2'-deoxycytidine in DNA + S-adenosyl-L-methionine = a 5-methyl-2'-deoxycytidine in DNA + S-adenosyl-L-homocysteine + H(+). In terms of biological role, DNA methyltransferase that specifically methylates the promoters of evolutionarily young retrotransposons in the male germline. De novo methylation and subsequent repression of transposable elements prevents their mobilization, which is essential for germline integrity. Compared to Dnmt3a and Dnmt3b, shows lower DNA methyltransferase efficiency. The polypeptide is DNA (cytosine-5)-methyltransferase 3C (Mus musculus (Mouse)).